The following is an 89-amino-acid chain: Small ribosomal subunit protein uS15 (89 aa).

Belongs to the universal ribosomal protein uS15 family. Part of the 30S ribosomal subunit. Forms a bridge to the 50S subunit in the 70S ribosome, contacting the 23S rRNA.

One of the primary rRNA binding proteins, it binds directly to 16S rRNA where it helps nucleate assembly of the platform of the 30S subunit by binding and bridging several RNA helices of the 16S rRNA. In terms of biological role, forms an intersubunit bridge (bridge B4) with the 23S rRNA of the 50S subunit in the ribosome. This Photorhabdus laumondii subsp. laumondii (strain DSM 15139 / CIP 105565 / TT01) (Photorhabdus luminescens subsp. laumondii) protein is Small ribosomal subunit protein uS15.